The primary structure comprises 374 residues: Hydroxylysine kinase (374 aa).

The active-site Proton acceptor is Asp228.

The protein belongs to the aminoglycoside phosphotransferase family.

It is found in the cytoplasm. The enzyme catalyses (5R)-5-hydroxy-L-lysine + GTP = (5R)-5-phosphooxy-L-lysine + GDP + H(+). Its function is as follows. Catalyzes the GTP-dependent phosphorylation of 5-hydroxy-L-lysine. This is Hydroxylysine kinase (hykk) from Xenopus laevis (African clawed frog).